The sequence spans 347 residues: Olfactory receptor 1L6 (347 aa).

The Extracellular portion of the chain corresponds to 1 to 62 (MSYFYRLKLM…GLSSNPQLQK (62 aa)). Asn41 carries N-linked (GlcNAc...) asparagine glycosylation. A helical membrane pass occupies residues 63–86 (PLFAIFLIMYLLAAVGNVLIIPAI). Residues 87–94 (YSDPRLHT) lie on the Cytoplasmic side of the membrane. Residues 95 to 116 (PMYFFLSNLSFMDICFTTVIVP) form a helical membrane-spanning segment. Residues 117-137 (KMLVNFLSETKVISYVGCLAQ) lie on the Extracellular side of the membrane. Cysteines 134 and 226 form a disulfide. Residues 138–157 (MYFFMAFGNTDSYLLASMAI) form a helical membrane-spanning segment. At 158–176 (DRLVAICNPLHYDVVMKPR) the chain is on the cytoplasmic side. Residues 177 to 195 (HCLLMLLGSCSISHLHSLF) form a helical membrane-spanning segment. Topologically, residues 196–233 (RVLLMSRLSFCASHIIKHFFCDTQPVLKLSCSDTSSSQ) are extracellular. The chain crosses the membrane as a helical span at residues 234-256 (MVVMTETLAVIVTPFLCIIFSYL). Residues 257–273 (RIMVTVLRIPSAAGKWK) are Cytoplasmic-facing. Residues 274–296 (AFSTCGSHLTAVALFYGSIIYVY) traverse the membrane as a helical segment. At 297–309 (FRPLSMYSVVRDR) the chain is on the extracellular side. The chain crosses the membrane as a helical span at residues 310 to 329 (VATVMYTVVTPMLNPFIYSL). Over 330–347 (RNKDMKRGLKKLQDRIYR) the chain is Cytoplasmic.

It belongs to the G-protein coupled receptor 1 family.

Its subcellular location is the cell membrane. In terms of biological role, odorant receptor. The protein is Olfactory receptor 1L6 (OR1L6) of Homo sapiens (Human).